The primary structure comprises 149 residues: Aspartate 1-decarboxylase (149 aa).

S25 acts as the Schiff-base intermediate with substrate; via pyruvic acid in catalysis. S25 is subject to Pyruvic acid (Ser). T57 contacts substrate. The active-site Proton donor is Y58. G73 to A75 serves as a coordination point for substrate. Residues G119–A149 are disordered.

It belongs to the PanD family. As to quaternary structure, heterooctamer of four alpha and four beta subunits. Requires pyruvate as cofactor. Is synthesized initially as an inactive proenzyme, which is activated by self-cleavage at a specific serine bond to produce a beta-subunit with a hydroxyl group at its C-terminus and an alpha-subunit with a pyruvoyl group at its N-terminus.

It localises to the cytoplasm. The enzyme catalyses L-aspartate + H(+) = beta-alanine + CO2. It functions in the pathway cofactor biosynthesis; (R)-pantothenate biosynthesis; beta-alanine from L-aspartate: step 1/1. In terms of biological role, catalyzes the pyruvoyl-dependent decarboxylation of aspartate to produce beta-alanine. This chain is Aspartate 1-decarboxylase, found in Parafrankia sp. (strain EAN1pec).